We begin with the raw amino-acid sequence, 252 residues long: uncharacterized protein (252 aa).

It belongs to the GSP E family.

This is an uncharacterized protein from Methanocaldococcus jannaschii (strain ATCC 43067 / DSM 2661 / JAL-1 / JCM 10045 / NBRC 100440) (Methanococcus jannaschii).